The following is a 490-amino-acid chain: Cytochrome P450 2C6 (490 aa).

N6-acetyllysine occurs at positions 249 and 375. C435 contributes to the heme binding site.

The protein belongs to the cytochrome P450 family. Heme is required as a cofactor.

Its subcellular location is the endoplasmic reticulum membrane. The protein resides in the microsome membrane. It carries out the reaction an organic molecule + reduced [NADPH--hemoprotein reductase] + O2 = an alcohol + oxidized [NADPH--hemoprotein reductase] + H2O + H(+). Cytochromes P450 are a group of heme-thiolate monooxygenases. In liver microsomes, this enzyme is involved in an NADPH-dependent electron transport pathway. It oxidizes a variety of structurally unrelated compounds, including steroids, fatty acids, and xenobiotics. The protein is Cytochrome P450 2C6 (Cyp2c6) of Rattus norvegicus (Rat).